Here is an 818-residue protein sequence, read N- to C-terminus: Phosphoinositide phosphatase SAC3 (818 aa).

In terms of domain architecture, SAC spans 153-546; it reads LCMVDLTKDF…GDTLAHQYGG (394 aa). The tract at residues 426–459 is disordered; sequence SLSSSSDADTGDISPHTSSDDDNGDHDSLEKKSS. The Phosphatase catalytic core signature appears at 482 to 493; that stretch reads RTNCIDCLDRTN. Residues 759–780 are compositionally biased toward polar residues; it reads LTAETSSTENSVNGVGQSAPTI. Residues 759–800 form a disordered region; sequence LTAETSSTENSVNGVGQSAPTISESGSSSSKGKEPMGTKIRE. Over residues 789–800 the composition is skewed to basic and acidic residues; it reads KGKEPMGTKIRE.

In terms of assembly, component of the PI(3,5)P2 regulatory complex at least composed of ATG18, SAC/FIG4, FAB1 and VAC14. The cofactor is Mg(2+). As to expression, ubiquitous with a higher level of expression in young seedlings than in other tissues.

The protein localises to the vacuole membrane. It catalyses the reaction a 1,2-diacyl-sn-glycero-3-phospho-(1D-myo-inositol-3,5-bisphosphate) + H2O = a 1,2-diacyl-sn-glycero-3-phospho-(1D-myo-inositol-3-phosphate) + phosphate. Functionally, the PI(3,5)P2 regulatory complex regulates both the synthesis and turnover of phosphatidylinositol 3,5-bisphosphate (PtdIns(3,5)P2). The protein is Phosphoinositide phosphatase SAC3 (SAC3) of Arabidopsis thaliana (Mouse-ear cress).